Here is a 257-residue protein sequence, read N- to C-terminus: Pyridoxine 5'-phosphate synthase (257 aa).

Residue Asn-6 coordinates 3-amino-2-oxopropyl phosphate. 8–9 is a binding site for 1-deoxy-D-xylulose 5-phosphate; it reads DH. A 3-amino-2-oxopropyl phosphate-binding site is contributed by Arg-17. The active-site Proton acceptor is His-41. 1-deoxy-D-xylulose 5-phosphate is bound by residues Arg-43 and His-48. Glu-68 serves as the catalytic Proton acceptor. Thr-98 provides a ligand contact to 1-deoxy-D-xylulose 5-phosphate. Catalysis depends on His-210, which acts as the Proton donor. Residues Gly-211 and 232-233 each bind 3-amino-2-oxopropyl phosphate; that span reads GQ.

The protein belongs to the PNP synthase family. As to quaternary structure, homooctamer; tetramer of dimers.

Its subcellular location is the cytoplasm. The enzyme catalyses 3-amino-2-oxopropyl phosphate + 1-deoxy-D-xylulose 5-phosphate = pyridoxine 5'-phosphate + phosphate + 2 H2O + H(+). The protein operates within cofactor biosynthesis; pyridoxine 5'-phosphate biosynthesis; pyridoxine 5'-phosphate from D-erythrose 4-phosphate: step 5/5. Catalyzes the complicated ring closure reaction between the two acyclic compounds 1-deoxy-D-xylulose-5-phosphate (DXP) and 3-amino-2-oxopropyl phosphate (1-amino-acetone-3-phosphate or AAP) to form pyridoxine 5'-phosphate (PNP) and inorganic phosphate. This is Pyridoxine 5'-phosphate synthase from Campylobacter jejuni subsp. doylei (strain ATCC BAA-1458 / RM4099 / 269.97).